A 244-amino-acid chain; its full sequence is Mast cell protease 2 (244 aa).

Positions 1–18 are cleaved as a signal peptide; that stretch reads MQALLFLMALLLPSGAGA. The propeptide at 19-20 is activation peptide; the sequence is EE. Residues 21–242 enclose the Peptidase S1 domain; it reads IIGGVEAKPH…YLPWIYKVLK (222 aa). N44 carries N-linked (GlcNAc...) asparagine glycosylation. C50 and C66 form a disulfide bridge. Active-site charge relay system residues include H65 and D109. Disulfide bonds link C143–C208 and C174–C187. The active-site Charge relay system is S202.

The protein belongs to the peptidase S1 family. Granzyme subfamily. Mucosal mast cells.

The protein is Mast cell protease 2 (Mcpt2) of Mus musculus (Mouse).